Here is a 132-residue protein sequence, read N- to C-terminus: Small ribosomal subunit protein uS11c (132 aa).

This sequence belongs to the universal ribosomal protein uS11 family. In terms of assembly, part of the 30S ribosomal subunit.

It is found in the plastid. It localises to the chloroplast. In Gnetum parvifolium (Small-leaved jointfir), this protein is Small ribosomal subunit protein uS11c.